We begin with the raw amino-acid sequence, 254 residues long: Alcohol dehydrogenase (254 aa).

10–33 (FVAGLGGIGLDTSREIVKSGPKNL) is an NAD(+) binding site. S138 is a binding site for substrate. Y151 (proton acceptor) is an active-site residue.

This sequence belongs to the short-chain dehydrogenases/reductases (SDR) family. Homodimer.

It carries out the reaction a primary alcohol + NAD(+) = an aldehyde + NADH + H(+). The enzyme catalyses a secondary alcohol + NAD(+) = a ketone + NADH + H(+). The chain is Alcohol dehydrogenase (Adh) from Drosophila differens (Fruit fly).